The primary structure comprises 948 residues: UvrABC system protein A (948 aa).

Residue 31 to 38 (GLSGSGKS) coordinates ATP. The C4-type zinc finger occupies 249-277 (CPNGHDIGFTELSPRMFSFNSPYGACETC). 2 consecutive ABC transporter domains span residues 307–586 (WAGS…KNSL) and 606–934 (GNGS…QYLK). Position 638–645 (638–645 (GVSGSGKS)) interacts with ATP. The C4-type zinc-finger motif lies at 737 to 763 (CETCEGDGILKIEMHFLPDVYVTCEVC).

This sequence belongs to the ABC transporter superfamily. UvrA family. Forms a heterotetramer with UvrB during the search for lesions.

It is found in the cytoplasm. Its function is as follows. The UvrABC repair system catalyzes the recognition and processing of DNA lesions. UvrA is an ATPase and a DNA-binding protein. A damage recognition complex composed of 2 UvrA and 2 UvrB subunits scans DNA for abnormalities. When the presence of a lesion has been verified by UvrB, the UvrA molecules dissociate. The polypeptide is UvrABC system protein A (Leptospira interrogans serogroup Icterohaemorrhagiae serovar copenhageni (strain Fiocruz L1-130)).